Reading from the N-terminus, the 88-residue chain is Ribonuclease P protein component 1 (88 aa).

The protein belongs to the eukaryotic/archaeal RNase P protein component 1 family. In terms of assembly, consists of a catalytic RNA component and at least 4-5 protein subunits.

The protein resides in the cytoplasm. It carries out the reaction Endonucleolytic cleavage of RNA, removing 5'-extranucleotides from tRNA precursor.. Part of ribonuclease P, a protein complex that generates mature tRNA molecules by cleaving their 5'-ends. The protein is Ribonuclease P protein component 1 of Nitrosopumilus maritimus (strain SCM1).